Reading from the N-terminus, the 365-residue chain is tRNA-specific 2-thiouridylase MnmA (365 aa).

Residues 14–21 (AMSGGVDS) and leucine 40 each bind ATP. Cysteine 108 (nucleophile) is an active-site residue. Residues cysteine 108 and cysteine 204 are joined by a disulfide bond. An ATP-binding site is contributed by glycine 132. An interaction with tRNA region spans residues 154–156 (KDQ). The active-site Cysteine persulfide intermediate is cysteine 204.

The protein belongs to the MnmA/TRMU family.

Its subcellular location is the cytoplasm. The enzyme catalyses S-sulfanyl-L-cysteinyl-[protein] + uridine(34) in tRNA + AH2 + ATP = 2-thiouridine(34) in tRNA + L-cysteinyl-[protein] + A + AMP + diphosphate + H(+). In terms of biological role, catalyzes the 2-thiolation of uridine at the wobble position (U34) of tRNA, leading to the formation of s(2)U34. This Rickettsia felis (strain ATCC VR-1525 / URRWXCal2) (Rickettsia azadi) protein is tRNA-specific 2-thiouridylase MnmA.